Reading from the N-terminus, the 82-residue chain is Small ribosomal subunit protein eS27B (82 aa).

The segment at 37–59 (CPGCLNITTVFSHAQTAVTCESC) adopts a C4-type zinc-finger fold.

This sequence belongs to the eukaryotic ribosomal protein eS27 family. In terms of assembly, component of the small ribosomal subunit (SSU). Mature yeast ribosomes consist of a small (40S) and a large (60S) subunit. The 40S small subunit contains 1 molecule of ribosomal RNA (18S rRNA) and 33 different proteins (encoded by 57 genes). The large 60S subunit contains 3 rRNA molecules (25S, 5.8S and 5S rRNA) and 46 different proteins (encoded by 81 genes). Zn(2+) is required as a cofactor. Post-translationally, the N-terminus is not modified.

It is found in the cytoplasm. Functionally, component of the ribosome, a large ribonucleoprotein complex responsible for the synthesis of proteins in the cell. The small ribosomal subunit (SSU) binds messenger RNAs (mRNAs) and translates the encoded message by selecting cognate aminoacyl-transfer RNA (tRNA) molecules. The large subunit (LSU) contains the ribosomal catalytic site termed the peptidyl transferase center (PTC), which catalyzes the formation of peptide bonds, thereby polymerizing the amino acids delivered by tRNAs into a polypeptide chain. The nascent polypeptides leave the ribosome through a tunnel in the LSU and interact with protein factors that function in enzymatic processing, targeting, and the membrane insertion of nascent chains at the exit of the ribosomal tunnel. The chain is Small ribosomal subunit protein eS27B from Saccharomyces cerevisiae (strain ATCC 204508 / S288c) (Baker's yeast).